The following is a 180-amino-acid chain: MAGGAVPNLKEKMQVPKDEDLLLGSFRDNQECSVAAEMKEHMSRLLGASQRRQRVDPKAVGSAVVWNTAANQSKKMGPQLRGVGVVGEQGDGGAQPQENPGGSQGMRSQFERRELNTLAEIGLEELNELEMEIMRRQLFMITERLRYLEDQSATWHQREVLLFTMLLSSCITNLWLWMRQ.

A disordered region spans residues 77–108; it reads GPQLRGVGVVGEQGDGGAQPQENPGGSQGMRS. Over residues 84–93 the composition is skewed to gly residues; sequence GVVGEQGDGG. Positions 96–107 are enriched in polar residues; sequence PQENPGGSQGMR. The chain crosses the membrane as a helical span at residues 160–178; the sequence is VLLFTMLLSSCITNLWLWM.

Interacts with BIK and RNF183. Interacts with IMMT/MIC60and EMD.

Its subcellular location is the mitochondrion. The protein localises to the mitochondrion outer membrane. It is found in the endoplasmic reticulum membrane. Involved in the regulation of endoplasmic reticulum (ER)-mitochondria coupling. Negatively regulates the ER-mitochondria distance and Ca(2+) transfer from ER to mitochondria possibly implicating it in the regulation of apoptosis. May collaborate with RNF183 to restrain BIK protein levels thus regulating apoptotic signaling. This Bos taurus (Bovine) protein is Fetal and adult testis-expressed transcript protein homolog (FATE1).